The primary structure comprises 429 residues: Gamma-glutamyl phosphate reductase (429 aa).

Belongs to the gamma-glutamyl phosphate reductase family.

The protein localises to the cytoplasm. It carries out the reaction L-glutamate 5-semialdehyde + phosphate + NADP(+) = L-glutamyl 5-phosphate + NADPH + H(+). Its pathway is amino-acid biosynthesis; L-proline biosynthesis; L-glutamate 5-semialdehyde from L-glutamate: step 2/2. Catalyzes the NADPH-dependent reduction of L-glutamate 5-phosphate into L-glutamate 5-semialdehyde and phosphate. The product spontaneously undergoes cyclization to form 1-pyrroline-5-carboxylate. The protein is Gamma-glutamyl phosphate reductase of Rhizorhabdus wittichii (strain DSM 6014 / CCUG 31198 / JCM 15750 / NBRC 105917 / EY 4224 / RW1) (Sphingomonas wittichii).